The following is a 339-amino-acid chain: Serine/threonine-protein kinase SRK2J (339 aa).

Residues tyrosine 4–phenylalanine 260 form the Protein kinase domain. ATP is bound by residues leucine 10–alanine 18 and lysine 33. Aspartate 123 acts as the Proton acceptor in catalysis. A disordered region spans residues serine 308–alanine 339. Residues aspartate 320–alanine 339 are compositionally biased toward acidic residues.

The protein belongs to the protein kinase superfamily. Ser/Thr protein kinase family. Expressed in seedlings.

It catalyses the reaction L-seryl-[protein] + ATP = O-phospho-L-seryl-[protein] + ADP + H(+). The catalysed reaction is L-threonyl-[protein] + ATP = O-phospho-L-threonyl-[protein] + ADP + H(+). In Arabidopsis thaliana (Mouse-ear cress), this protein is Serine/threonine-protein kinase SRK2J (SRK2J).